Here is a 626-residue protein sequence, read N- to C-terminus: UvrABC system protein C (626 aa).

A GIY-YIG domain is found at 20-97; it reads ECSGVYKMLD…IKKFQPKFNI (78 aa). A UVR domain is found at 207–242; the sequence is IALQANLSKKMQELSSQMRFEEAAEIRDRIKALSYV.

This sequence belongs to the UvrC family. In terms of assembly, interacts with UvrB in an incision complex.

It localises to the cytoplasm. In terms of biological role, the UvrABC repair system catalyzes the recognition and processing of DNA lesions. UvrC both incises the 5' and 3' sides of the lesion. The N-terminal half is responsible for the 3' incision and the C-terminal half is responsible for the 5' incision. This Rickettsia prowazekii (strain Madrid E) protein is UvrABC system protein C.